The primary structure comprises 69 residues: DNA-directed RNA polymerase subunit omega (69 aa).

Belongs to the RNA polymerase subunit omega family. As to quaternary structure, the RNAP catalytic core consists of 2 alpha, 1 beta, 1 beta' and 1 omega subunit. When a sigma factor is associated with the core the holoenzyme is formed, which can initiate transcription.

The enzyme catalyses RNA(n) + a ribonucleoside 5'-triphosphate = RNA(n+1) + diphosphate. Functionally, promotes RNA polymerase assembly. Latches the N- and C-terminal regions of the beta' subunit thereby facilitating its interaction with the beta and alpha subunits. The sequence is that of DNA-directed RNA polymerase subunit omega from Heliobacterium modesticaldum (strain ATCC 51547 / Ice1).